We begin with the raw amino-acid sequence, 85 residues long: Phosphoribosyl-AMP cyclohydrolase (85 aa).

Position 48 (aspartate 48) interacts with Mg(2+). Cysteine 49 lines the Zn(2+) pocket. Mg(2+)-binding residues include aspartate 50 and aspartate 52. Positions 65 and 72 each coordinate Zn(2+).

The protein belongs to the PRA-CH family. Homodimer. Requires Mg(2+) as cofactor. It depends on Zn(2+) as a cofactor.

The protein localises to the cytoplasm. The enzyme catalyses 1-(5-phospho-beta-D-ribosyl)-5'-AMP + H2O = 1-(5-phospho-beta-D-ribosyl)-5-[(5-phospho-beta-D-ribosylamino)methylideneamino]imidazole-4-carboxamide. It functions in the pathway amino-acid biosynthesis; L-histidine biosynthesis; L-histidine from 5-phospho-alpha-D-ribose 1-diphosphate: step 3/9. Catalyzes the hydrolysis of the adenine ring of phosphoribosyl-AMP. The chain is Phosphoribosyl-AMP cyclohydrolase (hisI) from Saccharolobus solfataricus (strain ATCC 35092 / DSM 1617 / JCM 11322 / P2) (Sulfolobus solfataricus).